Reading from the N-terminus, the 406-residue chain is 4-hydroxy-3-methylbut-2-enyl diphosphate reductase (406 aa).

Cys-66 lines the [4Fe-4S] cluster pocket. Residue His-96 coordinates (2E)-4-hydroxy-3-methylbut-2-enyl diphosphate. Position 96 (His-96) interacts with dimethylallyl diphosphate. His-96 contacts isopentenyl diphosphate. Residue Cys-157 coordinates [4Fe-4S] cluster. Residue His-185 participates in (2E)-4-hydroxy-3-methylbut-2-enyl diphosphate binding. His-185 contacts dimethylallyl diphosphate. Position 185 (His-185) interacts with isopentenyl diphosphate. Glu-187 functions as the Proton donor in the catalytic mechanism. Thr-250 provides a ligand contact to (2E)-4-hydroxy-3-methylbut-2-enyl diphosphate. Residue Cys-288 participates in [4Fe-4S] cluster binding. The (2E)-4-hydroxy-3-methylbut-2-enyl diphosphate site is built by Ser-317, Ser-318, Asn-319, and Ser-379. Dimethylallyl diphosphate contacts are provided by Ser-317, Ser-318, Asn-319, and Ser-379. 4 residues coordinate isopentenyl diphosphate: Ser-317, Ser-318, Asn-319, and Ser-379.

The protein belongs to the IspH family. [4Fe-4S] cluster is required as a cofactor.

It carries out the reaction isopentenyl diphosphate + 2 oxidized [2Fe-2S]-[ferredoxin] + H2O = (2E)-4-hydroxy-3-methylbut-2-enyl diphosphate + 2 reduced [2Fe-2S]-[ferredoxin] + 2 H(+). It catalyses the reaction dimethylallyl diphosphate + 2 oxidized [2Fe-2S]-[ferredoxin] + H2O = (2E)-4-hydroxy-3-methylbut-2-enyl diphosphate + 2 reduced [2Fe-2S]-[ferredoxin] + 2 H(+). Its pathway is isoprenoid biosynthesis; dimethylallyl diphosphate biosynthesis; dimethylallyl diphosphate from (2E)-4-hydroxy-3-methylbutenyl diphosphate: step 1/1. It participates in isoprenoid biosynthesis; isopentenyl diphosphate biosynthesis via DXP pathway; isopentenyl diphosphate from 1-deoxy-D-xylulose 5-phosphate: step 6/6. In terms of biological role, catalyzes the conversion of 1-hydroxy-2-methyl-2-(E)-butenyl 4-diphosphate (HMBPP) into a mixture of isopentenyl diphosphate (IPP) and dimethylallyl diphosphate (DMAPP). Acts in the terminal step of the DOXP/MEP pathway for isoprenoid precursor biosynthesis. This chain is 4-hydroxy-3-methylbut-2-enyl diphosphate reductase, found in Synechococcus sp. (strain RCC307).